The sequence spans 514 residues: 2,3-bisphosphoglycerate-independent phosphoglycerate mutase (514 aa).

Positions 14 and 64 each coordinate Mn(2+). The active-site Phosphoserine intermediate is S64. Residues H125, 155–156, R187, R193, 263–266, and K336 contribute to the substrate site; these read RD and RADR. The Mn(2+) site is built by D403, H407, D444, H445, and H463.

This sequence belongs to the BPG-independent phosphoglycerate mutase family. Monomer. Mn(2+) is required as a cofactor.

The enzyme catalyses (2R)-2-phosphoglycerate = (2R)-3-phosphoglycerate. It functions in the pathway carbohydrate degradation; glycolysis; pyruvate from D-glyceraldehyde 3-phosphate: step 3/5. Its function is as follows. Catalyzes the interconversion of 2-phosphoglycerate and 3-phosphoglycerate. The chain is 2,3-bisphosphoglycerate-independent phosphoglycerate mutase from Shewanella baltica (strain OS185).